A 44-amino-acid chain; its full sequence is uncharacterized protein (44 aa).

This is an uncharacterized protein from Caenorhabditis elegans.